The sequence spans 253 residues: Claudin domain-containing protein 1 (253 aa).

The helical transmembrane segment at 5–25 (FATAFVIACVLSLISTIYMAA) threads the bilayer. Residues N42 and N72 are each glycosylated (N-linked (GlcNAc...) asparagine). The next 3 helical transmembrane spans lie at 141–161 (FLLP…GLCA), 175–195 (ILHL…VAGI), and 216–236 (FCLA…FIWA).

The protein belongs to the PMP-22/EMP/MP20 family.

The protein resides in the cell junction. It localises to the tight junction. The protein localises to the cell membrane. In terms of biological role, plays a role in negatively regulating the permeability of cells to small molecules. This Macaca fascicularis (Crab-eating macaque) protein is Claudin domain-containing protein 1 (CLDND1).